The chain runs to 305 residues: Nitrogen assimilation regulatory protein nac (305 aa).

An HTH lysR-type domain is found at 1–58 (MNLRRLKYFVKIVDIGSLTQAAEVLHIAQPALSQQVATLEGEMDQQLLIRTKRGVTPT). The segment at residues 18–37 (LTQAAEVLHIAQPALSQQVA) is a DNA-binding region (H-T-H motif).

It belongs to the LysR transcriptional regulatory family.

Transcriptional activator for the hut, put and ure operons and repressor for the gdh and gltB operons in response to nitrogen limitation. Negative regulator of its own expression. The chain is Nitrogen assimilation regulatory protein nac (nac) from Klebsiella aerogenes (Enterobacter aerogenes).